Consider the following 347-residue polypeptide: MEGIFAAYVLPALIIALKSVVLLVVLLIVVAYLLYADRKIWAAVQLRRGPNVVGPWGLFQAFADLLKFVFKEPIIPSGANKGVFLLAPFISAVLAMATWAVIPVNESWAVANINVGILYIFAISSLEVYGVIMGGWASNSKYPFLGALRSAAQMVSYEVSIGFVIVTVLLTVGSLNLTDIVLSQNTGLGTMLGLPASFLDWNWLCLFPMFVVFFISALAETNRPPFDLVEAESELVAGHMIEYSSTPFLLFFLGEYVAITLMCALMTVLFLGGWLPPVDVWFLSWVPGIIWFMLKLCFCFFLFAMVKAFVPRYRYDQLMRLGWKVFLPISLFMVVATATFLKVFGLA.

Helical transmembrane passes span Leu13–Leu33, Pro50–Phe70, Gly82–Ile102, Val115–Gly135, Ile161–Val181, Phe198–Leu218, Phe248–Val268, Val286–Val306, and Val325–Gly345.

This sequence belongs to the complex I subunit 1 family. NDH-1 is composed of 14 different subunits. Subunits NuoA, H, J, K, L, M, N constitute the membrane sector of the complex.

It localises to the cell inner membrane. It carries out the reaction a quinone + NADH + 5 H(+)(in) = a quinol + NAD(+) + 4 H(+)(out). Functionally, NDH-1 shuttles electrons from NADH, via FMN and iron-sulfur (Fe-S) centers, to quinones in the respiratory chain. The immediate electron acceptor for the enzyme in this species is believed to be ubiquinone. Couples the redox reaction to proton translocation (for every two electrons transferred, four hydrogen ions are translocated across the cytoplasmic membrane), and thus conserves the redox energy in a proton gradient. This subunit may bind ubiquinone. The polypeptide is NADH-quinone oxidoreductase subunit H (Brucella ovis (strain ATCC 25840 / 63/290 / NCTC 10512)).